The following is a 305-amino-acid chain: UDP-3-O-acyl-N-acetylglucosamine deacetylase (305 aa).

3 residues coordinate Zn(2+): His78, His237, and Asp241. Catalysis depends on His264, which acts as the Proton donor.

The protein belongs to the LpxC family. Requires Zn(2+) as cofactor.

It carries out the reaction a UDP-3-O-[(3R)-3-hydroxyacyl]-N-acetyl-alpha-D-glucosamine + H2O = a UDP-3-O-[(3R)-3-hydroxyacyl]-alpha-D-glucosamine + acetate. Its pathway is glycolipid biosynthesis; lipid IV(A) biosynthesis; lipid IV(A) from (3R)-3-hydroxytetradecanoyl-[acyl-carrier-protein] and UDP-N-acetyl-alpha-D-glucosamine: step 2/6. Catalyzes the hydrolysis of UDP-3-O-myristoyl-N-acetylglucosamine to form UDP-3-O-myristoylglucosamine and acetate, the committed step in lipid A biosynthesis. This chain is UDP-3-O-acyl-N-acetylglucosamine deacetylase, found in Paraburkholderia xenovorans (strain LB400).